A 485-amino-acid chain; its full sequence is Probable outer membrane usher protein LpfC' (485 aa).

This sequence belongs to the fimbrial export usher family.

The protein resides in the cell outer membrane. In terms of biological role, part of the lpfABCC'DE fimbrial operon. LP fimbriae may participate in the interaction with eukaryotic cells by assisting in microcolony formation. Could be involved in the export and assembly of the fimbrial subunits across the outer membrane. This chain is Probable outer membrane usher protein LpfC' (lpfC'), found in Escherichia coli O157:H7.